The sequence spans 367 residues: MEEQQIPFQVRTDLAIEAKDMYTESKPEETNDKEIKGVTFKERSVKDIKVSYVDIDEEGEKLLGKKPGSYVTIYADGVKKQDTDRQGQAAQVLAKELEDLMRKNNVTKESTCLVVGLGNWNVTPDALGPMTVEKVLVTSHLFRLQYETVAQGYRDVAAVTPGVMGVTGIETSDIIFGIVEKYKPDLVIAVDALASRSINRVNETIQLSDTGIHPGSGVGNKRKEISKKTLGIPVIAIGVPTVVDAVTITSDTIDYVLKHFGREWKEKDDPSKSLTPAGMSFGNRKLTDEDLPNMEKRKTVLGIVGELSDEEKRKLITEVLTPLGHNLMVTPKEVDGFMIDMAEVLANGINAALHEKVDVDNFANYSR.

The propeptide occupies 1 to 13 (MEEQQIPFQVRTD). Residues 267–287 (KDDPSKSLTPAGMSFGNRKLT) form a disordered region.

This sequence belongs to the peptidase A25 family. As to quaternary structure, homotetramer. Autoproteolytically processed. The inactive tetrameric zymogen termed p46 autoprocesses to a smaller form termed p41, which is active only during spore germination.

It catalyses the reaction Endopeptidase action with P4 Glu or Asp, P1 preferably Glu &gt; Asp, P1' hydrophobic and P2' Ala.. Functionally, initiates the rapid degradation of small, acid-soluble proteins during spore germination. The protein is Germination protease of Oceanobacillus iheyensis (strain DSM 14371 / CIP 107618 / JCM 11309 / KCTC 3954 / HTE831).